The primary structure comprises 342 residues: MKVEDFDFDLPEELIAQTPLLDRTSSRLMVLDKKSGDIKDQHFTDIISYLNEGDALVLNDTRVLPARLHGIKDETGAHIEVLLLKQKEGNAWETLVKPAKRIRKGATITFGDGALKAICLEELEHGGRILEFSYEGIFYEVLEQLGEMPLPPYIKEQLADQDRYQTVYGKENGSAAAPTAGLHFTEDLLAKISAKGVEIIFVTLHVGLGTFRPVDVEDTTNHKMHSEFYRLTEESAERINKIKAQGGKVVAVGTTSIRTLETIASRHDGKLVAESGWTEIFISPGYTFQAVDALITNFHLPKSTLIMLVSALSDRTKILAAYNHAVEEQYRFFSFGDAMFIH.

Belongs to the QueA family. In terms of assembly, monomer.

It localises to the cytoplasm. The enzyme catalyses 7-aminomethyl-7-carbaguanosine(34) in tRNA + S-adenosyl-L-methionine = epoxyqueuosine(34) in tRNA + adenine + L-methionine + 2 H(+). It functions in the pathway tRNA modification; tRNA-queuosine biosynthesis. Its function is as follows. Transfers and isomerizes the ribose moiety from AdoMet to the 7-aminomethyl group of 7-deazaguanine (preQ1-tRNA) to give epoxyqueuosine (oQ-tRNA). The sequence is that of S-adenosylmethionine:tRNA ribosyltransferase-isomerase from Listeria monocytogenes serotype 4b (strain F2365).